The sequence spans 679 residues: Glycine--tRNA ligase beta subunit (679 aa).

This sequence belongs to the class-II aminoacyl-tRNA synthetase family. In terms of assembly, tetramer of two alpha and two beta subunits.

It is found in the cytoplasm. The catalysed reaction is tRNA(Gly) + glycine + ATP = glycyl-tRNA(Gly) + AMP + diphosphate. The chain is Glycine--tRNA ligase beta subunit from Streptococcus pyogenes serotype M12 (strain MGAS9429).